A 35-amino-acid polypeptide reads, in one-letter code: U14-ctenitoxin-Pn1a (35 aa).

Intrachain disulfides connect Cys-3–Cys-17, Cys-10–Cys-22, and Cys-16–Cys-32.

As to expression, expressed by the venom gland.

It localises to the secreted. In terms of biological role, neurotoxin. The protein is U14-ctenitoxin-Pn1a of Phoneutria nigriventer (Brazilian armed spider).